The following is a 215-amino-acid chain: Abscisic acid receptor PYL6 (215 aa).

The START-like stretch occupies residues 54-209 (HVVGPSQCFS…NLQSLAKLAE (156 aa)). The cysteines at positions 61 and 190 are disulfide-linked. Residues lysine 90, 120–125 (AAFSLE), 147–153 (RLMNYKS), and glutamate 174 contribute to the abscisate site. The Gate loop motif lies at 116 to 120 (SGLPA). Positions 146–148 (HRL) match the Latch loop motif.

The protein belongs to the PYR/PYL/RCAR abscisic acid intracellular receptor family. Monomer. Homodimer. Binds ABA on one subunit only. Interacts with HAB1, ABI1 and ABI2, and possibly with other PP2Cs. Binds to CARs protein in an ABA-independent manner, both at the plasma membrane and in the nucleus. Interacts directly with CAR1 and CAR4. Interacts with MYC2 in the nucleus. Interaction with MYC2 is increased in the presence of abscisic acid.

It is found in the cytoplasm. The protein resides in the nucleus. It localises to the cell membrane. Functionally, receptor for abscisic acid (ABA) required for ABA-mediated responses such as stomatal closure and germination inhibition. Inhibits the activity of group-A protein phosphatases type 2C (PP2Cs) in an ABA-independent manner but more efficiently when activated by ABA. Can be activated by both (-)-ABA and (+)-ABA. May link ABA and jasmonate signaling pathways by modifying MYC2 transcriptional activity, and regulation of JAZ6 and JAZ8 gene expression by MYC2. The sequence is that of Abscisic acid receptor PYL6 (PYL6) from Arabidopsis thaliana (Mouse-ear cress).